We begin with the raw amino-acid sequence, 421 residues long: Zinc finger protein 57 (421 aa).

Positions 15–88 (VSYEDVAVSF…SCTGVFKGGP (74 aa)) constitute a KRAB domain. Residues 90-113 (FFCLTCGKCFKKNTFLFNHQFPVR) form a C2H2-type 1; degenerate zinc finger. C2H2-type zinc fingers lie at residues 140 to 162 (FFCN…RRAH) and 168 to 190 (RSCP…LKVH). A disordered region spans residues 191-221 (QNKPAASNQAGNQASNQRLKSRVPPTTPRSQ). The span at 195–207 (AASNQAGNQASNQ) shows a compositional bias: low complexity. The segment at 264 to 286 (ISCPYCHITFTMRTCLLTHLKIH) adopts a C2H2-type 4 zinc-finger fold. The C2H2-type 5; degenerate zinc-finger motif lies at 313–332 (YTCPVCDSSFRGKESLLDHL). A disordered region spans residues 371–421 (GKRMESRRRRRKRACTENPETEGLSGKGRVAPWEMEGATSPESPVTEEDSD).

The protein belongs to the krueppel C2H2-type zinc-finger protein family. As to expression, expressed in oocytes and in a subset of adult tissues. Expressed at high levels in testis, and at low levels in cerebellum. Present in sciatic nerve and spinal cord (at protein level).

It is found in the nucleus. Its function is as follows. Transcription regulator required to maintain maternal and paternal gene imprinting, a process by which gene expression is restricted in a parent of origin-specific manner by epigenetic modification of genomic DNA and chromatin, including DNA methylation. Acts by controlling DNA methylation during the earliest multicellular stages of development at multiple imprinting control regions (ICRs). Acts together with ZNF445, but ZFP57 plays the predominant role in imprinting maintenance. In contrast, in humans, ZNF445 seems to be the major factor early embryonic imprinting maintenance. Required for the establishment of maternal methylation imprints at SNRPN locus. Acts as a transcriptional repressor in Schwann cells. Binds to a 5'-TGCCGC-3' consensus sequence and recognizes the methylated CpG within this element. The sequence is that of Zinc finger protein 57 (Zfp57) from Mus musculus (Mouse).